Here is a 157-residue protein sequence, read N- to C-terminus: Transcription elongation factor GreA (157 aa).

The protein belongs to the GreA/GreB family.

Its function is as follows. Necessary for efficient RNA polymerase transcription elongation past template-encoded arresting sites. The arresting sites in DNA have the property of trapping a certain fraction of elongating RNA polymerases that pass through, resulting in locked ternary complexes. Cleavage of the nascent transcript by cleavage factors such as GreA or GreB allows the resumption of elongation from the new 3'terminus. GreA releases sequences of 2 to 3 nucleotides. The chain is Transcription elongation factor GreA from Bartonella tribocorum (strain CIP 105476 / IBS 506).